Here is a 202-residue protein sequence, read N- to C-terminus: Chromophore lyase CpcT/CpeT 2 (202 aa).

The protein belongs to the CpcT/CpeT biliprotein lyase family.

Covalently attaches a chromophore to Cys residue(s) of phycobiliproteins. The chain is Chromophore lyase CpcT/CpeT 2 from Gloeobacter violaceus (strain ATCC 29082 / PCC 7421).